Here is a 430-residue protein sequence, read N- to C-terminus: Levansucrase Lscgamma (430 aa).

5 residues coordinate sucrose: Trp-60, Asp-61, Ala-147, Arg-217, and Asp-218. Catalysis depends on Asp-61, which acts as the Nucleophile. Glu-302 (proton donor/acceptor) is an active-site residue.

The protein belongs to the glycosyl hydrolase 68 family. Homodimer.

It catalyses the reaction [6)-beta-D-fructofuranosyl-(2-&gt;](n) alpha-D-glucopyranoside + sucrose = [6)-beta-D-fructofuranosyl-(2-&gt;](n+1) alpha-D-glucopyranoside + D-glucose. Sucrose hydrolase activity is negatively affected by salt concentration. The levan polymerization rate increases sharply in relation to sucrose concentration reaching the maximum at 100 mM sucrose, and then steadily decreases, suggesting a strong inhibition of the activity by the substrate. Catalyzes the synthesis of levan, a fructose polymer, by transferring the fructosyl moiety from sucrose to a growing acceptor molecule. Also displays sucrose hydrolase activity. Can depolymerize the levan produced once substrate is completely exhausted. This Pseudomonas syringae pv. actinidiae protein is Levansucrase Lscgamma.